A 225-amino-acid polypeptide reads, in one-letter code: Small ribosomal subunit protein uS3 (225 aa).

Residues 18 to 87 (VDEYLAKQFY…NPQITVTSVE (70 aa)) form the KH type-2 domain.

It belongs to the universal ribosomal protein uS3 family. Part of the 30S ribosomal subunit.

Binds the lower part of the 30S subunit head. The polypeptide is Small ribosomal subunit protein uS3 (Sulfurisphaera tokodaii (strain DSM 16993 / JCM 10545 / NBRC 100140 / 7) (Sulfolobus tokodaii)).